We begin with the raw amino-acid sequence, 480 residues long: Gasdermin-C2 (480 aa).

The tract at residues 1–226 is triggers pyroptosis; the sequence is MGYSFDRASK…TCVILPSATK (226 aa).

The protein belongs to the gasdermin family. As to quaternary structure, homooligomer; homooligomeric ring-shaped pore complex containing 27-28 subunits when inserted in the membrane. Cleavage by CASP8 relieves autoinhibition by releasing the N-terminal moiety (Gasdermin-C2, N-terminal) that initiates pyroptosis. Post-translationally, palmitoylated.

Its subcellular location is the cytoplasm. It localises to the cytosol. The protein localises to the cell membrane. The full-length protein before cleavage is inactive: intramolecular interactions between N- and C-terminal domains mediate autoinhibition in the absence of activation signal. The intrinsic pyroptosis-inducing activity is carried by the released N-terminal moiety (Gasdermin-C2, N-terminal) following cleavage by caspase CASP8 in response to type-2 immunity following worm infection. In terms of biological role, this form constitutes the precursor of the pore-forming protein: upon cleavage, the released N-terminal moiety (Gasdermin-C2, N-terminal) binds to membranes and forms pores, triggering pyroptosis. Functionally, pore-forming protein that causes membrane permeabilization and pyroptosis in response to type-2 immunity. Produced by the cleavage of gasdermin-C2 in response to type-2 immunity following worm infection. After cleavage, moves to the plasma membrane where it strongly binds to membrane inner leaflet lipids. Homooligomerizes within the membrane and forms pores of 10-15 nanometers (nm) of inner diameter, triggering pyroptosis and lytic cell death in enterocytes. The protein is Gasdermin-C2 of Mus musculus (Mouse).